The following is an 807-amino-acid chain: Glycerol-3-phosphate acyltransferase (807 aa).

Positions 308-313 (CHRSHM) match the HXXXXD motif motif.

Belongs to the GPAT/DAPAT family.

It is found in the cell inner membrane. It catalyses the reaction sn-glycerol 3-phosphate + an acyl-CoA = a 1-acyl-sn-glycero-3-phosphate + CoA. Its pathway is phospholipid metabolism; CDP-diacylglycerol biosynthesis; CDP-diacylglycerol from sn-glycerol 3-phosphate: step 1/3. This chain is Glycerol-3-phosphate acyltransferase, found in Shewanella amazonensis (strain ATCC BAA-1098 / SB2B).